A 440-amino-acid polypeptide reads, in one-letter code: Sequestosome-1 (440 aa).

A2 is subject to N-acetylalanine. Positions A2–R50 are interaction with LCK. The region spanning S3 to K102 is the PB1 domain. A Phosphoserine modification is found at S24. The interaction with PRKCZ and dimerization stretch occupies residues P43–R107. Positions R50–D80 are interaction with PAWR. A Glycyl lysine isopeptide (Lys-Gly) (interchain with G-Cter in ubiquitin) cross-link involves residue K91. The tract at residues V122–S224 is interaction with GABRR3. A ZZ-type zinc finger spans residues H123–G173. Residues C128, C131, C142, and C145 each contribute to the Zn(2+) site. Position 148 is a phosphotyrosine (Y148). Residues C151, C154, H160, and H163 each contribute to the Zn(2+) site. A phosphoserine mark is found at S170 and S176. The tract at residues S170–P220 is LIM protein-binding (LB). K189 participates in a covalent cross-link: Glycyl lysine isopeptide (Lys-Gly) (interchain with G-Cter in ubiquitin). A disordered region spans residues P196 to N235. A phosphoserine mark is found at S207, S233, S249, and S266. Residues P228 to S233 carry the TRAF6-binding motif. The disordered stretch occupies residues K264–A390. Phosphothreonine is present on T269. Residues T269–L440 are interaction with NTRK1. S272 and S282 each carry phosphoserine. Low complexity predominate over residues S283–P296. Residues C289 and C290 are each lipidated (S-palmitoyl cysteine). S306 carries the post-translational modification Phosphoserine. A compositionally biased stretch (basic and acidic residues) spans Q310–E324. The segment at R321 to S342 is MAP1LC3B-binding. Phosphoserine occurs at positions 328 and 332. The LIR motif lies at D336–L341. A compositionally biased stretch (basic and acidic residues) spans D337 to D347. The segment at D347–E352 is interaction with KEAP1. Residue S349 is modified to Phosphoserine; by ULK1. Over residues G351–G373 the composition is skewed to polar residues. Phosphoserine is present on residues S355, S361, S365, and S366. A UBA domain is found at E389–S434. S403 is subject to Phosphoserine; by CK2, ULK1 and TBK1. S407 is subject to Phosphoserine; by ULK1. 2 positions are modified to N6-acetyllysine; alternate: K420 and K435. Residue K420 forms a Glycyl lysine isopeptide (Lys-Gly) (interchain with G-Cter in ubiquitin); alternate linkage. Residue K435 forms a Glycyl lysine isopeptide (Lys-Gly) (interchain with G-Cter in SUMO2); alternate linkage.

Homooligomer or heterooligomer; may form homotypic arrays. Dimerization interferes with ubiquitin binding. Component of a ternary complex with PAWR and PRKCZ. Forms a complex with JUB/Ajuba, PRKCZ and TRAF6. Identified in a complex with TRAF6 and CYLD. Identified in a heterotrimeric complex with ubiquitin and ZFAND5, where ZFAND5 and SQSTM1 both interact with the same ubiquitin molecule. Interacts (via LIR motif) with MAP1LC3A and MAP1LC3B, as well as with other ATG8 family members, including GABARAP, GABARAPL1 and GABARAPL2; these interactions are necessary for the recruitment MAP1 LC3 family members to inclusion bodies containing polyubiquitinated protein aggregates and for their degradation by autophagy. Interacts directly with PRKCI and PRKCZ. Interacts with EBI3, LCK, RASA1, NR2F2, NTRK1, NTRK2, NTRK3, NBR1, MAP2K5 and MAPKAPK5. Upon TNF-alpha stimulation, interacts with RIPK1 probably bridging IKBKB to the TNF-R1 complex composed of TNF-R1/TNFRSF1A, TRADD and RIPK1. Interacts with the proteasome subunits PSMD4 and PSMC2. Interacts with TRAF6. Interacts with 'Lys-63'-linked polyubiquitinated MAPT/TAU. Interacts with FHOD3. Interacts with CYLD. Interacts with SESN1. Interacts with SESN2. Interacts with ULK1. Interacts with UBD. Interacts with WDR81; the interaction is direct and regulates the interaction of SQSTM1 with ubiquitinated proteins. Interacts with WDFY3; this interaction is required to recruit WDFY3 to cytoplasmic bodies and to PML bodies. Interacts with LRRC25. Interacts with STING1; leading to relocalization of STING1 to autophagosomes. Interacts (when phosphorylated at Ser-349) with KEAP1; the interaction is direct and inactivates the BCR(KEAP1) complex by sequestering KEAP1 in inclusion bodies, promoting its degradation. Interacts with MOAP1; promoting dissociation of SQSTM1 inclusion bodies that sequester KEAP1. Interacts with GBP1. Interacts with TAX1BP1. Interacts with (ubiquitinated) PEX5; specifically binds PEX5 ubiquitinated at 'Lys-209' in response to reactive oxygen species (ROS). Interacts (via PB1 domain) with TNS2; the interaction leads to sequestration of TNS2 in cytoplasmic aggregates with SQSTM1 and promotes TNS2 ubiquitination and proteasomal degradation. Interacts with IRS1; the interaction is disrupted by the presence of tensin TNS2. Interacts with TRIM5. Interacts with TRIM11 (when ubiquitinated); promoting AIM2 recruitment to autophagosomes and autophagy-dependent degradation of AIM2. Interacts with TRIM13. Interacts with TRIM16. Interacts with TRIM23. Interacts with TRIM50. Interacts with TRIM55. Interacts with ECSIT; this interaction inhibits TLR4 signaling via functional regulation of the TRAF6-ECSIT complex. Interacts with GABRR1, GABRR2 and GABRR3. Interacts with WDR83. Interacts with GRB2. Interacts with USP12; the interaction is independent of USP12 deubiquitinase activity and may be involved in regulation of autophagic flux. Interacts with ASB6. Phosphorylation at Ser-407 by ULK1 destabilizes the UBA dimer interface and increases binding affinity to ubiquitinated proteins. Phosphorylation at Ser-407 also primes for subsequent phosphorylation at Ser-403. Phosphorylation at Ser-403 by CK2 or ULK1 promotes binding to ubiquitinated proteins by increasing the affinity between the UBA domain and polyubiquitin chains. Phosphorylation at Ser-403 by ULK1 is stimulated by SESN2. Phosphorylated at Ser-403 by TBK1, leading to promote relocalization of 'Lys-63'-linked ubiquitinated STING1 to autophagosomes. Phosphorylation at Ser-349 by ULK1 promotes interaction with KEAP1 and inactivation of the BCR(KEAP1) complex, promoting NFE2L2/NRF2 nuclear accumulation and expression of phase II detoxifying enzymes. Phosphorylated in vitro by TTN. Post-translationally, ubiquitinated by UBE2J1 and RNF26 at Lys-435: ubiquitinated SQSTM1 attracts specific vesicle-associated adapters, forming a molecular bridge that restrains cognate vesicles in the perinuclear region and organizes the endosomal pathway for efficient cargo transport. Ubiquitination by UBE2D2 and UBE2D3 increases its ability to bind polyubiquitin chains by destabilizing the UBA dimer interface. Deubiquitination by USP15 releases target vesicles for fast transport into the cell periphery. Ubiquitinated by the BCR(KEAP1) complex at Lys-420, increasing SQSTM1 sequestering activity and promoting its degradation. Ubiquitinated via 'Lys-29' and 'Lys-33'-linked polyubiquitination leading to xenophagic targeting of bacteria and inhibition of their replication. In terms of processing, acetylated at Lys-420 and Lys-435 by KAT5/TIP60, promotes activity by destabilizing the UBA dimer interface and increases binding affinity to ubiquitinated proteins. Deacetylated by HDAC6. Palmitoylation at Cys-289 and Cys-290 by ZDHHC19 is required for efficient autophagic degradation of SQSTM1-cargo complexes by promoting affinity for ATG8 proteins and recruitment of p62 bodies to autophagosomes. Dealmitoylated at Cys-289 and Cys-290 by LYPLA1. Post-translationally, (Microbial infection) Cleaved by S.pyogenes SpeB protease; leading to its degradation. Degradation by SpeB prevents autophagy, promoting to S.pyogenes intracellular replication. In terms of processing, (Microbial infection) Deubiquitinated by Epstein-Barr virus BPLF1; leading to inhibition of the recruitment of MAP1LC3A/LC3 to SQSTM1-positive structures. As to expression, ubiquitously expressed.

The protein resides in the cytoplasmic vesicle. Its subcellular location is the autophagosome. The protein localises to the preautophagosomal structure. It is found in the cytoplasm. It localises to the cytosol. The protein resides in the nucleus. Its subcellular location is the PML body. The protein localises to the late endosome. It is found in the lysosome. It localises to the endoplasmic reticulum. The protein resides in the myofibril. Its subcellular location is the sarcomere. Its function is as follows. Molecular adapter required for selective macroautophagy (aggrephagy) by acting as a bridge between polyubiquitinated proteins and autophagosomes. Promotes the recruitment of ubiquitinated cargo proteins to autophagosomes via multiple domains that bridge proteins and organelles in different steps. SQSTM1 first mediates the assembly and removal of ubiquitinated proteins by undergoing liquid-liquid phase separation upon binding to ubiquitinated proteins via its UBA domain, leading to the formation of insoluble cytoplasmic inclusions, known as p62 bodies. SQSTM1 then interacts with ATG8 family proteins on autophagosomes via its LIR motif, leading to p62 body recruitment to autophagosomes, followed by autophagic clearance of ubiquitinated proteins. SQSTM1 is itself degraded along with its ubiquitinated cargos. Also required to recruit ubiquitinated proteins to PML bodies in the nucleus. Also involved in autophagy of peroxisomes (pexophagy) in response to reactive oxygen species (ROS) by acting as a bridge between ubiquitinated PEX5 receptor and autophagosomes. Acts as an activator of the NFE2L2/NRF2 pathway via interaction with KEAP1: interaction inactivates the BCR(KEAP1) complex by sequestering the complex in inclusion bodies, promoting nuclear accumulation of NFE2L2/NRF2 and subsequent expression of cytoprotective genes. Promotes relocalization of 'Lys-63'-linked ubiquitinated STING1 to autophagosomes. Involved in endosome organization by retaining vesicles in the perinuclear cloud: following ubiquitination by RNF26, attracts specific vesicle-associated adapters, forming a molecular bridge that restrains cognate vesicles in the perinuclear region and organizes the endosomal pathway for efficient cargo transport. Sequesters tensin TNS2 into cytoplasmic puncta, promoting TNS2 ubiquitination and proteasomal degradation. May regulate the activation of NFKB1 by TNF-alpha, nerve growth factor (NGF) and interleukin-1. May play a role in titin/TTN downstream signaling in muscle cells. Adapter that mediates the interaction between TRAF6 and CYLD. This is Sequestosome-1 from Homo sapiens (Human).